Consider the following 375-residue polypeptide: Putative fimbrium tip subunit Fim1C (375 aa).

Residues Met-1–Ala-16 form the signal peptide. Cys-17 carries N-palmitoyl cysteine lipidation. Residue Cys-17 is the site of S-diacylglycerol cysteine attachment. The propeptide occupies Cys-17–Lys-47.

Belongs to the bacteroidetes fimbrillin superfamily. FimA/Mfa1 family. May be part of the fimbrial tip.

It localises to the fimbrium. The protein localises to the cell outer membrane. Functionally, probably a component of the fimbrium tip. Fimbriae are filamentous appendages on the cell surface that mediate cell adhesion and biofilm formation. The sequence is that of Putative fimbrium tip subunit Fim1C from Parabacteroides distasonis (strain ATCC 8503 / DSM 20701 / CIP 104284 / JCM 5825 / NCTC 11152).